Consider the following 190-residue polypeptide: Protein soem-1 (190 aa).

The SH2 domain occupies 96 to 190 (YMEQNMNRVE…LVLKNQLKPV (95 aa)).

In terms of assembly, interacts with abl-1. In terms of tissue distribution, expressed in PQR, but not AQR, Q neuroblast descendents.

In terms of biological role, functions downstream of migratory protein mig-13 and may play a role in the control of Q neuroblast migration during larval development. This chain is Protein soem-1, found in Caenorhabditis elegans.